Here is a 275-residue protein sequence, read N- to C-terminus: uncharacterized protein (275 aa).

2 disordered regions span residues 1–25 (MIGG…DQEQ) and 185–275 (QRGE…RHHM). A compositionally biased stretch (basic and acidic residues) spans 228–239 (KPGDGEENAKDD).

This is an uncharacterized protein from Neurospora crassa (strain ATCC 24698 / 74-OR23-1A / CBS 708.71 / DSM 1257 / FGSC 987).